Consider the following 332-residue polypeptide: NAD-dependent protein deacetylase hst2 (332 aa).

One can recognise a Deacetylase sirtuin-type domain in the interval 7-269; that stretch reads KHVDSSKHLE…RALCKLLGWS (263 aa). Residues 35-55 and 118-121 each bind NAD(+); these read GAGISTAAGIPDFRSPETGIY and QNID. Catalysis depends on histidine 138, which acts as the Proton acceptor. Zn(2+) contacts are provided by cysteine 146, cysteine 149, cysteine 170, and cysteine 173. NAD(+)-binding positions include 210–212, 235–237, and cysteine 255; these read GTS and NRE.

It belongs to the sirtuin family. Class I subfamily. Zn(2+) serves as cofactor.

The protein resides in the cytoplasm. The protein localises to the nucleus. It catalyses the reaction N(6)-acetyl-L-lysyl-[protein] + NAD(+) + H2O = 2''-O-acetyl-ADP-D-ribose + nicotinamide + L-lysyl-[protein]. In terms of biological role, NAD-dependent histone deacetylase, which could function in telomeric silencing, cell cycle progression and chromosome stability. This is NAD-dependent protein deacetylase hst2 (hst2) from Schizosaccharomyces pombe (strain 972 / ATCC 24843) (Fission yeast).